The chain runs to 232 residues: Thiamine import ATP-binding protein ThiQ (232 aa).

The region spanning 2-230 is the ABC transporter domain; the sequence is LKLTDITWLY…KASASAILGI (229 aa). 32 to 39 provides a ligand contact to ATP; that stretch reads GPSGAGKS.

It belongs to the ABC transporter superfamily. Thiamine importer (TC 3.A.1.19.1) family. The complex is composed of two ATP-binding proteins (ThiQ), two transmembrane proteins (ThiP) and a solute-binding protein (ThiB).

Its subcellular location is the cell inner membrane. It catalyses the reaction thiamine(out) + ATP + H2O = thiamine(in) + ADP + phosphate + H(+). In terms of biological role, part of the ABC transporter complex ThiBPQ involved in thiamine import. Responsible for energy coupling to the transport system. The protein is Thiamine import ATP-binding protein ThiQ of Shigella flexneri serotype 5b (strain 8401).